The sequence spans 147 residues: Phospholipase A2 SSD387 (147 aa).

An N-terminal signal peptide occupies residues 1 to 19 (MSPKFLLFSIIAVWSCAAA). Residues 20 to 28 (IEALFIQPR) constitute a propeptide that is removed on maturation. 5 disulfide bridges follow: cysteine 55–cysteine 71, cysteine 70–cysteine 130, cysteine 77–cysteine 123, cysteine 86–cysteine 116, and cysteine 109–cysteine 121. Ca(2+) contacts are provided by glycine 56 and glycine 58. Histidine 74 is an active-site residue. A Ca(2+)-binding site is contributed by aspartate 75. Residue aspartate 124 is part of the active site.

The cofactor is Ca(2+). As to expression, expressed by the venom gland.

The protein localises to the secreted. It carries out the reaction a 1,2-diacyl-sn-glycero-3-phosphocholine + H2O = a 1-acyl-sn-glycero-3-phosphocholine + a fatty acid + H(+). In terms of biological role, PLA2 catalyzes the calcium-dependent hydrolysis of the 2-acyl groups in 3-sn-phosphoglycerides. The sequence is that of Phospholipase A2 SSD387 from Scolopendra dehaani (Thai centipede).